Here is a 412-residue protein sequence, read N- to C-terminus: Tryptophan 2,3-dioxygenase (412 aa).

Residues 79–83 (FIVVH), Tyr-146, and Arg-150 each bind substrate. His-346 is a binding site for heme. Residue Thr-360 coordinates substrate.

Belongs to the tryptophan 2,3-dioxygenase family. Homotetramer. Requires heme as cofactor.

It catalyses the reaction L-tryptophan + O2 = N-formyl-L-kynurenine. It participates in amino-acid degradation; L-tryptophan degradation via kynurenine pathway; L-kynurenine from L-tryptophan: step 1/2. In terms of biological role, heme-dependent dioxygenase that catalyzes the oxidative cleavage of the L-tryptophan (L-Trp) pyrrole ring and converts L-tryptophan to N-formyl-L-kynurenine. Catalyzes the oxidative cleavage of the indole moiety. This Sorangium cellulosum (strain So ce56) (Polyangium cellulosum (strain So ce56)) protein is Tryptophan 2,3-dioxygenase.